Here is a 247-residue protein sequence, read N- to C-terminus: MSGKDRIEIFPSRMAQTIMKARLKGAQTGRNLLKKKSDALTLRFRQILKKIIETKMLMGEVMREAAFSLAEAKFTAGDFSTTVIQNVNKAQVKIRAKKDNVAGVTLPVFEHYHEGTDSYELTGLARGGEQLAKLKRNYAKAVELLVELASLQTSFVTLDEAIKITNRRVNRIEHVIIPRIERTLAYIITELDEREREEFYRLKKIQEKKKILKEKSDKDLEQRRAAGEVIEPANLLAEEKDEDLLFE.

Belongs to the V-ATPase D subunit family. V-ATPase is a heteromultimeric enzyme made up of two complexes: the ATP-hydrolytic V1 complex and the proton translocation V0 complex. The V1 complex consists of three catalytic AB heterodimers that form a heterohexamer, three peripheral stalks each consisting of EG heterodimers, one central rotor including subunits D and F, and the regulatory subunits C and H. The proton translocation complex V0 consists of the proton transport subunit a, a ring of proteolipid subunits c9c'', rotary subunit d, subunits e and f, and the accessory subunits ATP6AP1/Ac45 and ATP6AP2/PRR. Interacts with SNX10. In terms of tissue distribution, expressed in brain (at protein level). Present in tissues active in secretion. Amounts elevated in brain, kidney and testis.

Its subcellular location is the membrane. The protein localises to the cytoplasmic vesicle. The protein resides in the clathrin-coated vesicle membrane. It localises to the cytoplasm. It is found in the cytoskeleton. Its subcellular location is the microtubule organizing center. The protein localises to the centrosome. The protein resides in the cell projection. It localises to the cilium. Its function is as follows. Subunit of the V1 complex of vacuolar(H+)-ATPase (V-ATPase), a multisubunit enzyme composed of a peripheral complex (V1) that hydrolyzes ATP and a membrane integral complex (V0) that translocates protons. V-ATPase is responsible for acidifying and maintaining the pH of intracellular compartments and in some cell types, is targeted to the plasma membrane, where it is responsible for acidifying the extracellular environment. May play a role in cilium biogenesis through regulation of the transport and the localization of proteins to the cilium. The sequence is that of V-type proton ATPase subunit D (ATP6V1D) from Bos taurus (Bovine).